We begin with the raw amino-acid sequence, 291 residues long: Neugrin (291 aa).

An N-terminal signal peptide occupies residues 1–15 (MAVTLSLLLSGRVCA). Positions 27-49 (VADPGPIGREPDPDSDWEPEERE) are disordered. The span at 39-49 (PDSDWEPEERE) shows a compositional bias: acidic residues. Ser41 carries the phosphoserine modification. The N-linked (GlcNAc...) asparagine glycan is linked to Asn158. The segment at 224–270 (VAAPLGHPRELQKYSSDSESPRRTGNGALPSDQKLEELKAEEPGNFS) is disordered. A compositionally biased stretch (basic and acidic residues) spans 256 to 265 (QKLEELKAEE).

The protein belongs to the neugrin family. In terms of assembly, forms a regulatory protein-RNA complex, consisting of RCC1L, NGRN, RPUSD3, RPUSD4, TRUB2, FASTKD2 and 16S mt-rRNA. Interacts with 16S mt-rRNA; this interaction is direct.

It localises to the nucleus. The protein localises to the secreted. It is found in the mitochondrion membrane. Plays an essential role in mitochondrial ribosome biogenesis. As a component of a functional protein-RNA module, consisting of RCC1L, NGRN, RPUSD3, RPUSD4, TRUB2, FASTKD2 and 16S mitochondrial ribosomal RNA (16S mt-rRNA), controls 16S mt-rRNA abundance and is required for intra-mitochondrial translation of core subunits of the oxidative phosphorylation system. The protein is Neugrin (NGRN) of Pongo abelii (Sumatran orangutan).